The following is a 357-amino-acid chain: Histidinol-phosphate aminotransferase (357 aa).

The residue at position 218 (Lys-218) is an N6-(pyridoxal phosphate)lysine.

Belongs to the class-II pyridoxal-phosphate-dependent aminotransferase family. Histidinol-phosphate aminotransferase subfamily. In terms of assembly, homodimer. Pyridoxal 5'-phosphate is required as a cofactor.

It carries out the reaction L-histidinol phosphate + 2-oxoglutarate = 3-(imidazol-4-yl)-2-oxopropyl phosphate + L-glutamate. It functions in the pathway amino-acid biosynthesis; L-histidine biosynthesis; L-histidine from 5-phospho-alpha-D-ribose 1-diphosphate: step 7/9. The sequence is that of Histidinol-phosphate aminotransferase from Prosthecochloris aestuarii (strain DSM 271 / SK 413).